Here is a 165-residue protein sequence, read N- to C-terminus: Transcription antitermination protein NusB (165 aa).

It belongs to the NusB family.

Its function is as follows. Involved in transcription antitermination. Required for transcription of ribosomal RNA (rRNA) genes. Binds specifically to the boxA antiterminator sequence of the ribosomal RNA (rrn) operons. The protein is Transcription antitermination protein NusB of Rhodococcus erythropolis (strain PR4 / NBRC 100887).